The sequence spans 263 residues: MAGQTTADYIGHHLSFLKTGDGFWNVHLDTLFFSLVAGATFLFFFSRVAKNATDGVPGKFQCFVEMIVEWVDGLVKDNFHGSREVVAPLALTVFCWVFVMNAIDLIPVDYPPQFAALLGIDYLRAVPTADISATLGMAICVFCLIIFYTIKSKGFSGFVKEYTLHPFNHWAFIPVNFVLEIVTLLAKPISLAFRLFGNMYAGELIFILIAVMYMADNFLLQALGLPLHLAWAIFHILVITLQAFIFMMLTIVYLSIAYNKADH.

6 helical membrane-spanning segments follow: residues 26 to 46, 86 to 106, 130 to 150, 166 to 186, 195 to 215, and 229 to 249; these read VHLD…FFFS, VAPL…IDLI, DISA…FYTI, PFNH…TLLA, LFGN…MYMA, and LAWA…FMML.

It belongs to the ATPase A chain family. As to quaternary structure, F-type ATPases have 2 components, CF(1) - the catalytic core - and CF(0) - the membrane proton channel. CF(1) has five subunits: alpha(3), beta(3), gamma(1), delta(1), epsilon(1). CF(0) has three main subunits: a(1), b(2) and c(9-12). The alpha and beta chains form an alternating ring which encloses part of the gamma chain. CF(1) is attached to CF(0) by a central stalk formed by the gamma and epsilon chains, while a peripheral stalk is formed by the delta and b chains.

Its subcellular location is the cell inner membrane. Its function is as follows. Key component of the proton channel; it plays a direct role in the translocation of protons across the membrane. This chain is ATP synthase subunit a, found in Glaesserella parasuis serovar 5 (strain SH0165) (Haemophilus parasuis).